A 366-amino-acid polypeptide reads, in one-letter code: MSIIIPVKLPHTSYNIAIAPGSLSQLGSHLEPLKLGQKILIISNPEIFNYYGDVVVNSLKKSGFEVFTHLIPAGEAYKTLDSIAQVYDTALEHRLERSSTMIALGGGVIGDMTGFAAATWLRGINFVQVPTSLLAMVDASIGGKTGVNHPQGKNLIGAFYQPRLVFIDPSVLKTLPVREFRAGMAEVIKYGIIWDKALFEQLEQAKTLDHLNSLNDELLQTIITRSCQAKVDVVSQDEKESGLRAILNYGHTIGHAIESLTGYETINHGEAVAMGMVAAGKIAIKLSLWTQEETIRQDQLIDKVGLISTIPKTLDIDQVIESLQSDKKVKSGKVRFILPTSIGKVIISDQVSSEIIKSVMIHQVNK.

Residues 107-111 (GVIGD), 131-132 (TS), Lys-144, and Lys-153 each bind NAD(+). The Zn(2+) site is built by Glu-186, His-251, and His-268.

This sequence belongs to the sugar phosphate cyclases superfamily. Dehydroquinate synthase family. It depends on Co(2+) as a cofactor. Requires Zn(2+) as cofactor. The cofactor is NAD(+).

The protein resides in the cytoplasm. The catalysed reaction is 7-phospho-2-dehydro-3-deoxy-D-arabino-heptonate = 3-dehydroquinate + phosphate. It participates in metabolic intermediate biosynthesis; chorismate biosynthesis; chorismate from D-erythrose 4-phosphate and phosphoenolpyruvate: step 2/7. Catalyzes the conversion of 3-deoxy-D-arabino-heptulosonate 7-phosphate (DAHP) to dehydroquinate (DHQ). The chain is 3-dehydroquinate synthase from Rippkaea orientalis (strain PCC 8801 / RF-1) (Cyanothece sp. (strain PCC 8801)).